A 611-amino-acid chain; its full sequence is Rop guanine nucleotide exchange factor 5 (611 aa).

The segment at 1 to 62 (MENLVKSCAG…PPPPPSQILG (62 aa)) is disordered. Residues 34 to 51 (STSGASYESSSTTTVASS) are compositionally biased toward low complexity. One can recognise a PRONE domain in the interval 93–477 (FKAKEMNSAD…DLTKQSDDNN (385 aa)). Disordered stretches follow at residues 513–541 (TTPG…TNKI) and 588–611 (DVEE…YTVS). Over residues 525–541 (KKGERRTPYSSKDTNKI) the composition is skewed to basic and acidic residues.

Guanine-nucleotide exchange factor (GEF) that acts as an activator of Rop (Rho of plants) GTPases by promoting the exchange of GDP for GTP. The polypeptide is Rop guanine nucleotide exchange factor 5 (ROPGEF5) (Arabidopsis thaliana (Mouse-ear cress)).